The primary structure comprises 212 residues: Thymidylate kinase (212 aa).

An ATP-binding site is contributed by 11-18 (GGEGVGKS).

This sequence belongs to the thymidylate kinase family.

It catalyses the reaction dTMP + ATP = dTDP + ADP. Its function is as follows. Phosphorylation of dTMP to form dTDP in both de novo and salvage pathways of dTTP synthesis. This chain is Thymidylate kinase, found in Chromohalobacter salexigens (strain ATCC BAA-138 / DSM 3043 / CIP 106854 / NCIMB 13768 / 1H11).